The following is a 150-amino-acid chain: 6,7-dimethyl-8-ribityllumazine synthase (150 aa).

5-amino-6-(D-ribitylamino)uracil-binding positions include F11, 43–45, and 67–69; these read VYD and AVI. A (2S)-2-hydroxy-3-oxobutyl phosphate-binding site is contributed by 72–73; the sequence is AT. The Proton donor role is filled by H75. A 5-amino-6-(D-ribitylamino)uracil-binding site is contributed by L100. A (2S)-2-hydroxy-3-oxobutyl phosphate-binding site is contributed by R115.

Belongs to the DMRL synthase family.

The enzyme catalyses (2S)-2-hydroxy-3-oxobutyl phosphate + 5-amino-6-(D-ribitylamino)uracil = 6,7-dimethyl-8-(1-D-ribityl)lumazine + phosphate + 2 H2O + H(+). It functions in the pathway cofactor biosynthesis; riboflavin biosynthesis; riboflavin from 2-hydroxy-3-oxobutyl phosphate and 5-amino-6-(D-ribitylamino)uracil: step 1/2. Its function is as follows. Catalyzes the formation of 6,7-dimethyl-8-ribityllumazine by condensation of 5-amino-6-(D-ribitylamino)uracil with 3,4-dihydroxy-2-butanone 4-phosphate. This is the penultimate step in the biosynthesis of riboflavin. In Pyrobaculum arsenaticum (strain DSM 13514 / JCM 11321 / PZ6), this protein is 6,7-dimethyl-8-ribityllumazine synthase.